Consider the following 530-residue polypeptide: Zinc finger protein ZIC 4 (530 aa).

Basic residues-rich tracts occupy residues 31–40 (HHPHHHHHPP) and 97–113 (NPHH…HHMA). 2 disordered regions span residues 31–50 (HHPH…TGYP) and 87–138 (PGAL…SYSS). Residues 284–317 (LICKWIEEDQLPKKLCSKTFSTMHELVTHVTVEH) form a C2H2-type 1; atypical zinc finger. A C2H2-type 2; atypical zinc finger spans residues 326–353 (HICFWEECPREGKPFKAKYKLVNHIRVH). 3 consecutive C2H2-type zinc fingers follow at residues 359-383 (FPCP…KRTH), 389-413 (FKCE…SHVH), and 419-443 (YNCK…MKVH). Residues 432-530 (HPSSLRKHMK…YSNWQATNTF (99 aa)) form a disordered region. The span at 435–444 (SLRKHMKVHC) shows a compositional bias: basic residues. Composition is skewed to low complexity over residues 455 to 467 (SSIP…SSDS) and 474 to 485 (TSSQPEPPTSSQ). Positions 520 to 530 (SYSNWQATNTF) are enriched in polar residues.

Belongs to the GLI C2H2-type zinc-finger protein family. As to expression, at mid-gastrula stage (stage 11.5), weakly expressed in the prospective neural fold. Expressed in the neural plate border region at early neurula stage (stage 15) with strongest expression in the prospective regions of the hyoid and branchial crests. Expression in the dorsal central nervous system (CNS) continues through late neurula stage and early tail bud stages with expression strongest in the olfactory placode and expression levels increasing as development progresses. Becomes expressed in somites.

Its subcellular location is the nucleus. May bind to DNA. Induces neural and neural crest differentiation. Does not induce anterior neural tissue. In Xenopus laevis (African clawed frog), this protein is Zinc finger protein ZIC 4 (zic4).